The following is a 424-amino-acid chain: UPF0597 protein SO_1403 (424 aa).

Belongs to the UPF0597 family.

The sequence is that of UPF0597 protein SO_1403 from Shewanella oneidensis (strain ATCC 700550 / JCM 31522 / CIP 106686 / LMG 19005 / NCIMB 14063 / MR-1).